Here is a 272-residue protein sequence, read N- to C-terminus: Tryptophan synthase alpha chain (272 aa).

Catalysis depends on proton acceptor residues E60 and D71.

This sequence belongs to the TrpA family. As to quaternary structure, tetramer of two alpha and two beta chains.

It catalyses the reaction (1S,2R)-1-C-(indol-3-yl)glycerol 3-phosphate + L-serine = D-glyceraldehyde 3-phosphate + L-tryptophan + H2O. It functions in the pathway amino-acid biosynthesis; L-tryptophan biosynthesis; L-tryptophan from chorismate: step 5/5. Functionally, the alpha subunit is responsible for the aldol cleavage of indoleglycerol phosphate to indole and glyceraldehyde 3-phosphate. The sequence is that of Tryptophan synthase alpha chain from Methanosarcina acetivorans (strain ATCC 35395 / DSM 2834 / JCM 12185 / C2A).